The primary structure comprises 78 residues: Conotoxin ArMKLT2-0312 (78 aa).

The signal sequence occupies residues 1–22; that stretch reads MKLTCVLIIAVLFLTACQLITA. Residues 23 to 45 constitute a propeptide that is removed on maturation; sequence DYSRDKQEYRAVRLRDAMRYSRV. Position 48 is a pyrrolidone carboxylic acid (Gln-48). 3 disulfides stabilise this stretch: Cys-49–Cys-62, Cys-56–Cys-67, and Cys-61–Cys-75.

It belongs to the conotoxin O1 superfamily. Expressed by the venom duct.

The protein localises to the secreted. This is Conotoxin ArMKLT2-0312 from Conus arenatus (Sand-dusted cone).